A 239-amino-acid chain; its full sequence is Fatty acid metabolism regulator protein (239 aa).

An HTH gntR-type domain is found at Gln-6–Phe-74. Positions Glu-34–Gln-53 form a DNA-binding region, H-T-H motif.

As to quaternary structure, homodimer.

Its subcellular location is the cytoplasm. Functionally, multifunctional regulator of fatty acid metabolism. The polypeptide is Fatty acid metabolism regulator protein (Cronobacter sakazakii (strain ATCC BAA-894) (Enterobacter sakazakii)).